The chain runs to 416 residues: Gamma-glutamyl phosphate reductase (416 aa).

It belongs to the gamma-glutamyl phosphate reductase family.

It localises to the cytoplasm. The enzyme catalyses L-glutamate 5-semialdehyde + phosphate + NADP(+) = L-glutamyl 5-phosphate + NADPH + H(+). The protein operates within amino-acid biosynthesis; L-proline biosynthesis; L-glutamate 5-semialdehyde from L-glutamate: step 2/2. Functionally, catalyzes the NADPH-dependent reduction of L-glutamate 5-phosphate into L-glutamate 5-semialdehyde and phosphate. The product spontaneously undergoes cyclization to form 1-pyrroline-5-carboxylate. The polypeptide is Gamma-glutamyl phosphate reductase (Glaesserella parasuis serovar 5 (strain SH0165) (Haemophilus parasuis)).